The primary structure comprises 309 residues: Porphobilinogen deaminase (309 aa).

S-(dipyrrolylmethanemethyl)cysteine is present on Cys-241.

The protein belongs to the HMBS family. As to quaternary structure, monomer. Dipyrromethane serves as cofactor.

The enzyme catalyses 4 porphobilinogen + H2O = hydroxymethylbilane + 4 NH4(+). It participates in porphyrin-containing compound metabolism; protoporphyrin-IX biosynthesis; coproporphyrinogen-III from 5-aminolevulinate: step 2/4. In terms of biological role, tetrapolymerization of the monopyrrole PBG into the hydroxymethylbilane pre-uroporphyrinogen in several discrete steps. The chain is Porphobilinogen deaminase from Geobacillus kaustophilus (strain HTA426).